Here is a 61-residue protein sequence, read N- to C-terminus: Adipokinetic prohormone type 2 (61 aa).

The first 22 residues, 1–22 (MTQSCTLTLVLVVAVLAALATA), serve as a signal peptide directing secretion. Gln23 carries the pyrrolidone carboxylic acid modification. At Trp30 the chain carries Tryptophan amide.

It belongs to the AKH/HRTH/RPCH family. As to quaternary structure, adipokinetic hormone precursor-related peptide (APRP) can form three type of disulfide-bond dimers: p1 (alpha-alpha), p2 (alpha-beta), and p3 (beta-beta).

The protein localises to the secreted. Its function is as follows. This hormone, released from cells in the corpora cardiaca, causes release of diglycerides from the fat body and stimulation of muscles to use these diglycerides as an energy source during energy-demanding processes. The polypeptide is Adipokinetic prohormone type 2 (Locusta migratoria (Migratory locust)).